The chain runs to 312 residues: MEAQQIISRFCPKSSLAPSIPMVKQPFSLNFPPLHSLSSYPFLQSQNLGFPTGALHAISFVHKEVCSSSWRIWCSKSSSSTAEPEEDHEVRAQVTVRRKKLAVFVSGGGSNFRSIHEASKKGSLHGDVTVLVTNKSECGGAQYARNNGIPVILFPKAKDEPKGLSPCDLVDTLRKFEVDFVLLAGYLKLIPVELIRAFERSIFNIHPSLLPAFGGKGYYGMKVHKAVIASGARFSGPTIHFVDEHYDTGRILAQRVVPVLANDTAEELAARVLNEEHQLYVEVVEALCEERIVWRKDGVPLIQSRENPNEFL.

A chloroplast-targeting transit peptide spans 1–73 (MEAQQIISRF…EVCSSSWRIW (73 aa)). 109–111 (GSN) lines the N(1)-(5-phospho-beta-D-ribosyl)glycinamide pocket. (6R)-10-formyltetrahydrofolate-binding positions include Lys162, 187–190 (LKLI), and Asn204. The Proton donor role is filled by His206. Asp247 serves as a coordination point for (6R)-10-formyltetrahydrofolate. Glu276 serves as a coordination point for N(1)-(5-phospho-beta-D-ribosyl)glycinamide.

This sequence belongs to the GART family.

The protein resides in the plastid. Its subcellular location is the chloroplast. It catalyses the reaction N(1)-(5-phospho-beta-D-ribosyl)glycinamide + (6R)-10-formyltetrahydrofolate = N(2)-formyl-N(1)-(5-phospho-beta-D-ribosyl)glycinamide + (6S)-5,6,7,8-tetrahydrofolate + H(+). The protein operates within purine metabolism; IMP biosynthesis via de novo pathway; N(2)-formyl-N(1)-(5-phospho-D-ribosyl)glycinamide from N(1)-(5-phospho-D-ribosyl)glycinamide (10-formyl THF route): step 1/1. This is Phosphoribosylglycinamide formyltransferase, chloroplastic (PUR3) from Vigna unguiculata (Cowpea).